Consider the following 166-residue polypeptide: Small ribosomal subunit protein uS5 (166 aa).

Residues 11–74 enclose the S5 DRBM domain; the sequence is LIEKLVSVKR…ENAKKNMVSV (64 aa).

It belongs to the universal ribosomal protein uS5 family. As to quaternary structure, part of the 30S ribosomal subunit. Contacts proteins S4 and S8.

Its function is as follows. With S4 and S12 plays an important role in translational accuracy. Located at the back of the 30S subunit body where it stabilizes the conformation of the head with respect to the body. This Francisella tularensis subsp. holarctica (strain LVS) protein is Small ribosomal subunit protein uS5.